Consider the following 118-residue polypeptide: Large ribosomal subunit protein uL24 (118 aa).

Belongs to the universal ribosomal protein uL24 family. Part of the 50S ribosomal subunit.

In terms of biological role, one of two assembly initiator proteins, it binds directly to the 5'-end of the 23S rRNA, where it nucleates assembly of the 50S subunit. Functionally, one of the proteins that surrounds the polypeptide exit tunnel on the outside of the subunit. This Prochlorococcus marinus (strain AS9601) protein is Large ribosomal subunit protein uL24.